A 250-amino-acid polypeptide reads, in one-letter code: Low affinity immunoglobulin gamma Fc region receptor III-A (250 aa).

The signal sequence occupies residues 1-16; the sequence is MWQLLPPAALLLLVSA. The Extracellular segment spans residues 17-208; it reads DTQTADPSKA…VSSFFLPWHQ (192 aa). Ig-like C2-type domains are found at residues 23 to 105 and 99 to 189; these read PSKA…LEVH and PVKL…VQIT. 2 disulfide bridges follow: cysteine 47/cysteine 89 and cysteine 128/cysteine 172. N-linked (GlcNAc...) asparagine glycosylation is found at asparagine 56 and asparagine 63. N-linked (GlcNAc...) asparagine glycosylation is present at asparagine 180. Residues 209–225 traverse the membrane as a helical segment; the sequence is ITFCLVMGVLFAVDTGL. Topologically, residues 226–250 are cytoplasmic; sequence YFSVRRHLQSSEEWRDGKVTWSKGP.

As to quaternary structure, forms a heterooligomeric complex with ITAM-containing signaling subunits FCER1G. Interacts (via transmembrane domain) with signaling subunits; this interaction is a prerequisite for receptor complex expression on the cell surface and intracellular signal transduction. Binds the Fc region of antigen-complexed IgG. In terms of tissue distribution, expressed in gamma-delta T cells.

It localises to the cell membrane. In terms of biological role, receptor for the invariable Fc fragment of immunoglobulin gamma (IgG). Optimally activated upon binding of clustered antigen-IgG complexes displayed on cell surfaces, triggers lysis of antibody-coated cells, a process known as antibody-dependent cellular cytotoxicity (ADCC). Does not bind free monomeric IgG, thus avoiding inappropriate effector cell activation in the absence of antigenic trigger. Mediates IgG effector functions on natural killer (NK) cells. Binds antigen-IgG complexes generated upon infection and triggers NK cell-dependent cytokine production and degranulation to limit viral load and propagation. Fc-binding subunit that associates with FCER1G adapters to form functional signaling complexes. Following the engagement of antigen-IgG complexes, triggers phosphorylation of immunoreceptor tyrosine-based activation motif (ITAM)-containing adapter with subsequent activation of phosphatidylinositol 3-kinase signaling and sustained elevation of intracellular calcium that ultimately drive NK cell activation. Mediates enhanced ADCC in response to afucosylated IgGs. The polypeptide is Low affinity immunoglobulin gamma Fc region receptor III-A (Bos taurus (Bovine)).